Reading from the N-terminus, the 479-residue chain is Sulfate adenylyltransferase subunit 1 (479 aa).

One can recognise a tr-type G domain in the interval 25–239 (KSLLRFLTCG…EVLETVDIQR (215 aa)). The interval 34–41 (GSVDDGKS) is G1. 34–41 (GSVDDGKS) serves as a coordination point for GTP. The segment at 92–96 (GITID) is G2. Residues 113–116 (DTPG) form a G3 region. GTP is bound by residues 113-117 (DTPGH) and 168-171 (NKMD). Residues 168–171 (NKMD) form a G4 region. Residues 206–208 (SAL) are G5.

The protein belongs to the TRAFAC class translation factor GTPase superfamily. Classic translation factor GTPase family. CysN/NodQ subfamily. Heterodimer composed of CysD, the smaller subunit, and CysN.

It catalyses the reaction sulfate + ATP + H(+) = adenosine 5'-phosphosulfate + diphosphate. Its pathway is sulfur metabolism; hydrogen sulfide biosynthesis; sulfite from sulfate: step 1/3. Functionally, with CysD forms the ATP sulfurylase (ATPS) that catalyzes the adenylation of sulfate producing adenosine 5'-phosphosulfate (APS) and diphosphate, the first enzymatic step in sulfur assimilation pathway. APS synthesis involves the formation of a high-energy phosphoric-sulfuric acid anhydride bond driven by GTP hydrolysis by CysN coupled to ATP hydrolysis by CysD. The chain is Sulfate adenylyltransferase subunit 1 from Salmonella typhi.